The primary structure comprises 482 residues: Transcription initiation factor IIE subunit alpha (482 aa).

In terms of domain architecture, HTH TFE/IIEalpha-type spans 9–99 (VKNLLKFVVR…KYPHAIDAIK (91 aa)). The C4-type zinc-finger motif lies at 124-152 (CPICLTKYTQLEAVQLLNFDRTEFLCSLC). The span at 274-286 (RELQERQAEEKRK) shows a compositional bias: basic and acidic residues. 2 disordered regions span residues 274–295 (RELQ…EWHK) and 321–482 (AMDS…FEDV). Residues 321–345 (AMDSINPDNEPAQETSYQNNRTLTE) are compositionally biased toward polar residues. A compositionally biased stretch (acidic residues) spans 374-401 (EEEEEEEEEEDEEEEEEEEMEDVMDDND). Positions 419-432 (TAGTAKTESNTSND) are enriched in polar residues. Over residues 433-444 (VKQESINDKTED) the composition is skewed to basic and acidic residues. Residues 464–482 (GDDDDDDDDDEMDIEFEDV) are compositionally biased toward acidic residues.

The protein belongs to the TFIIE alpha subunit family. As to quaternary structure, TFIIE is a tetramer of two alpha (TFA1) and two beta (TFA2) subunits.

It localises to the nucleus. Recruits TFIIH to the initiation complex and stimulates the RNA polymerase II C-terminal domain kinase and DNA-dependent ATPase activities of TFIIH. Both TFIIH and TFIIE are required for promoter clearance by RNA polymerase. This Saccharomyces cerevisiae (strain ATCC 204508 / S288c) (Baker's yeast) protein is Transcription initiation factor IIE subunit alpha (TFA1).